Here is a 497-residue protein sequence, read N- to C-terminus: ADP-dependent glucokinase (497 aa).

Residues 1 to 22 (MALWRGSAYAGFLALAVGCVFL) form the signal peptide. The 446-residue stretch at 52–497 (SPEGRLAAAW…LFYSEVHPHY (446 aa)) folds into the ADPK domain. E297, E328, and D481 together coordinate Mg(2+). D481 serves as the catalytic Proton acceptor.

It belongs to the ADP-dependent glucokinase family. As to quaternary structure, monomer. It depends on Mg(2+) as a cofactor.

It localises to the secreted. It catalyses the reaction D-glucose + ADP = D-glucose 6-phosphate + AMP + H(+). It functions in the pathway carbohydrate degradation; glycolysis. In terms of biological role, catalyzes the phosphorylation of D-glucose to D-glucose 6-phosphate using ADP as the phosphate donor. GDP and CDP can replace ADP, but with reduced efficiency. The polypeptide is ADP-dependent glucokinase (ADPGK) (Homo sapiens (Human)).